Here is a 60-residue protein sequence, read N- to C-terminus: Large ribosomal subunit protein eL37 (60 aa).

4 residues coordinate Zn(2+): Cys19, Cys22, Cys34, and Cys37. The C4-type zinc-finger motif lies at 19-37; sequence CRRCGSISYHARHKVCSAC.

It belongs to the eukaryotic ribosomal protein eL37 family. The cofactor is Zn(2+).

In terms of biological role, binds to the 23S rRNA. The protein is Large ribosomal subunit protein eL37 of Methanosphaerula palustris (strain ATCC BAA-1556 / DSM 19958 / E1-9c).